Here is a 277-residue protein sequence, read N- to C-terminus: MMERFPRLAQRVLSVPFTPKYLKSCKKTNPLTSHLMQLRGSQRPIFIQWNLQGRPSVCTDLISKKNYSSATARAGWFLGLGEKKKQAMPDIVKAGDPVLHEPSQDIPLEEIGSERIQKIIEEMVKVMRNAPGVGLAAPQIGIPLKIIVLEDTNEYISYAPKDETKAQDRRPFGLLVIINPKLKKKGNKTALFFEGCLSVDGFRAVVERHLEVEVTGLDRNGKAIKVDASGWQARILQHEYDHLDGTLYVDKMAPRTFRTVENLDLPLAAGCPKLGVC.

Cys-196 and His-238 together coordinate Zn(2+). Glu-239 is an active-site residue. His-242 is a binding site for Zn(2+).

Belongs to the polypeptide deformylase family. Requires Zn(2+) as cofactor.

Its subcellular location is the plastid. The protein resides in the chloroplast stroma. It carries out the reaction N-terminal N-formyl-L-methionyl-[peptide] + H2O = N-terminal L-methionyl-[peptide] + formate. Removes the formyl group from the N-terminal Met of newly synthesized proteins. The sequence is that of Peptide deformylase 1A, chloroplastic (PDF1A) from Solanum lycopersicum (Tomato).